The following is a 366-amino-acid chain: Pyruvate dehydrogenase E1 component subunit beta, mitochondrial (366 aa).

Residues 1–33 (MFSRLPTSLARNVARRAPTSFVRPSAAAAALRF) constitute a mitochondrion transit peptide. Residue glutamate 95 coordinates thiamine diphosphate. K(+) contacts are provided by alanine 196, isoleucine 197, aspartate 199, and asparagine 201.

As to quaternary structure, pyruvate dehydrogenase (E1) is a tetramer of 2 alpha and 2 beta subunits. Eukaryotic pyruvate dehydrogenase (PDH) complexes are organized as a core consisting of the oligomeric dihydrolipoamide acetyl-transferase (E2), around which are arranged multiple copies of pyruvate dehydrogenase (E1), dihydrolipoamide dehydrogenase (E3) and protein X (E3BP) bound by non-covalent bonds. It depends on thiamine diphosphate as a cofactor.

It is found in the mitochondrion matrix. The catalysed reaction is N(6)-[(R)-lipoyl]-L-lysyl-[protein] + pyruvate + H(+) = N(6)-[(R)-S(8)-acetyldihydrolipoyl]-L-lysyl-[protein] + CO2. Its function is as follows. The pyruvate dehydrogenase complex catalyzes the overall conversion of pyruvate to acetyl-CoA and CO(2). This Saccharomyces cerevisiae (strain ATCC 204508 / S288c) (Baker's yeast) protein is Pyruvate dehydrogenase E1 component subunit beta, mitochondrial (PDB1).